The primary structure comprises 587 residues: MPYDATKMMDWQISEEAEKDMPSPWQWQEKLGLLKEEILPMGRLCKLDFLKIMNRLKDKPDGKYIEVTAITPTPLGEGKSTTSVGLMEGLGKRGVNVGGCLRQPSGGPTMNIKGTAAGGGNALLIPMTEFSMGLTGDINDIMNAHNLAMVALTARMQHERNYTDEQLDRLTKMRRLHIDPTRVEMGWIMDFCAQALRNIIIGIGGRQDGYMMQSKFGIAVSSELMAILSIVKDLPDLRKRLNEITVAFDRRGNPVTTGDLEVGGAMTAFMRNTINPTLMCTAEYQPCMVHAGPFANIAVGQSSIIADRIGLKMFDYHVTESGFAADIGFEKFWNVKCRYSGLKPHVSVLTTTIRALKMHGGGPKVVAGLAMPEEYTKENLKLLEKGIVNMVHHINTIRKSGMNPVVCINAFHTDTKDEIALVRKHAEAAGARCALSEHWAKGGEGALEFADAVIDACKQESQFKFLYPLEMKLRDRVSTVAREVYGADGVSWTPDAEAKAKMLENDPKYDDYATMMVKTHLSLTHDPSVKGVPKGWVLPIRDVLIYSGAKFLCPCAGTISLMPGTSSNPAFRRIDVDVNTGKVKGLF.

ATP is bound at residue 73–80 (TPLGEGKS).

It belongs to the formate--tetrahydrofolate ligase family.

It carries out the reaction (6S)-5,6,7,8-tetrahydrofolate + formate + ATP = (6R)-10-formyltetrahydrofolate + ADP + phosphate. It participates in one-carbon metabolism; tetrahydrofolate interconversion. In Syntrophobacter fumaroxidans (strain DSM 10017 / MPOB), this protein is Formate--tetrahydrofolate ligase.